The following is a 489-amino-acid chain: Glutamate--tRNA ligase (489 aa).

Positions 12–22 (PSPTGIPHVGM) match the 'HIGH' region motif. A 'KMSKS' region motif is present at residues 256 to 260 (KLSKR). Position 259 (lysine 259) interacts with ATP.

This sequence belongs to the class-I aminoacyl-tRNA synthetase family. Glutamate--tRNA ligase type 1 subfamily. In terms of assembly, monomer.

Its subcellular location is the cytoplasm. It catalyses the reaction tRNA(Glu) + L-glutamate + ATP = L-glutamyl-tRNA(Glu) + AMP + diphosphate. In terms of biological role, catalyzes the attachment of glutamate to tRNA(Glu) in a two-step reaction: glutamate is first activated by ATP to form Glu-AMP and then transferred to the acceptor end of tRNA(Glu). The polypeptide is Glutamate--tRNA ligase (Mycobacterium marinum (strain ATCC BAA-535 / M)).